Here is an 813-residue protein sequence, read N- to C-terminus: Cadherin-22 (813 aa).

Residues 1 to 33 (MRPRPAGALRAGAALSPVLLLLLLLQLLGHLWA) form the signal peptide. Residues 34–621 (ASTPAPSSLS…AFVMAASLSP (588 aa)) are Extracellular-facing. 5 Cadherin domains span residues 61–165 (WVWN…EPRF), 166–274 (LHGP…PPRF), 275–391 (PQKM…PPEF), 392–495 (RPPS…NPPE), and 496–613 (LATP…TTAF). Asn159 carries an N-linked (GlcNAc...) asparagine glycan. Residues Asn463 and Asn609 are each glycosylated (N-linked (GlcNAc...) asparagine). A helical transmembrane segment spans residues 622-642 (GALIALLVCVLILVVLALLIL). Over 643-813 (TLRRHHKSHL…HRGDDEAPAS (171 aa)) the chain is Cytoplasmic. The interval 696 to 726 (GGDPGGGAASPPQAASSSERHSLPRGPSSPE) is disordered.

Strongly expressed in the pituitary gland and the brain (in the inner granular and glomerular layers of the olfactory bulb, anterior olfactory nucleus, primary olfactory cortex, Purkinje cell layer of cerebellum, and pineal gland). Low expression in lung and heart. No expression in submandibular gland, thymus, liver, spleen, adrenal, and kidney.

The protein resides in the cell membrane. Functionally, cadherins are calcium-dependent cell adhesion proteins. They preferentially interact with themselves in a homophilic manner in connecting cells; cadherins may thus contribute to the sorting of heterogeneous cell types. PB-cadherins may have a role in the morphological organization of pituitary gland and brain tissues. The sequence is that of Cadherin-22 (Cdh22) from Rattus norvegicus (Rat).